Here is a 38-residue protein sequence, read N- to C-terminus: Photosystem II reaction center protein L (38 aa).

The helical transmembrane segment at 17 to 37 threads the bilayer; the sequence is SLFIGLLLVLVLALLFSSYFF.

The protein belongs to the PsbL family. PSII is composed of 1 copy each of membrane proteins PsbA, PsbB, PsbC, PsbD, PsbE, PsbF, PsbH, PsbI, PsbJ, PsbK, PsbL, PsbM, PsbT, PsbX, PsbY, PsbZ, Psb30/Ycf12, peripheral proteins PsbO, CyanoQ (PsbQ), PsbU, PsbV and a large number of cofactors. It forms dimeric complexes.

The protein localises to the cellular thylakoid membrane. Functionally, one of the components of the core complex of photosystem II (PSII). PSII is a light-driven water:plastoquinone oxidoreductase that uses light energy to abstract electrons from H(2)O, generating O(2) and a proton gradient subsequently used for ATP formation. It consists of a core antenna complex that captures photons, and an electron transfer chain that converts photonic excitation into a charge separation. This subunit is found at the monomer-monomer interface and is required for correct PSII assembly and/or dimerization. The polypeptide is Photosystem II reaction center protein L (Acaryochloris marina (strain MBIC 11017)).